A 494-amino-acid chain; its full sequence is Hexokinase-2 (494 aa).

The 452-residue stretch at 32–483 folds into the Hexokinase domain; it reads GRADAVLREL…SGIGAALLAA (452 aa). The segment at 87–225 is hexokinase small subdomain; it reads SGEEKGVFYA…GLDMKVTALI (139 aa). ADP-binding residues include Gly101, Thr102, and Asn103. D-glucose contacts are provided by Thr191, Lys192, Asn226, and Asp227. The tract at residues 226 to 472 is hexokinase large subdomain; sequence NDTIGTLAGG…STIVIKLAKD (247 aa). Thr250 lines the ADP pocket. Asn253, Glu281, and Glu312 together coordinate D-glucose. Gly437 contributes to the ADP binding site.

Belongs to the hexokinase family. As to expression, expressed in roots, leaves, flowers, immature seeds, endosperm and seed coat.

The catalysed reaction is a D-hexose + ATP = a D-hexose 6-phosphate + ADP + H(+). It catalyses the reaction D-fructose + ATP = D-fructose 6-phosphate + ADP + H(+). It carries out the reaction D-glucose + ATP = D-glucose 6-phosphate + ADP + H(+). It functions in the pathway carbohydrate metabolism; hexose metabolism. It participates in carbohydrate degradation; glycolysis; D-glyceraldehyde 3-phosphate and glycerone phosphate from D-glucose: step 1/4. Fructose and glucose phosphorylating enzyme. This chain is Hexokinase-2 (HXK2), found in Oryza sativa subsp. japonica (Rice).